Here is a 509-residue protein sequence, read N- to C-terminus: Hyaluronidase PH-20 (509 aa).

The first 35 residues, 1–35 (MGVLKFKHIFFRSFVKSSGVSQIVFTFLLIPCCLT), serve as a signal peptide directing secretion. 2 disulfide bridges follow: Cys60–Cys351 and Cys224–Cys238. A glycan (N-linked (GlcNAc...) asparagine) is linked at Asn82. Catalysis depends on Glu148, which acts as the Proton donor. Residues Asn166, Asn235, Asn254, and Asn368 are each glycosylated (N-linked (GlcNAc...) asparagine). Intrachain disulfides connect Cys376–Cys387, Cys381–Cys435, and Cys437–Cys464. The N-linked (GlcNAc...) asparagine glycan is linked to Asn393. Ser490 carries GPI-anchor amidated serine lipidation. The propeptide at 491-509 (ATMFIVSILFLIISSVASL) is removed in mature form.

This sequence belongs to the glycosyl hydrolase 56 family. Post-translationally, N-glycosylated. In terms of tissue distribution, testis.

It localises to the cell membrane. It catalyses the reaction Random hydrolysis of (1-&gt;4)-linkages between N-acetyl-beta-D-glucosamine and D-glucuronate residues in hyaluronate.. In terms of biological role, involved in sperm-egg adhesion. Upon fertilization sperm must first penetrate a layer of cumulus cells that surrounds the egg before reaching the zona pellucida. The cumulus cells are embedded in a matrix containing hyaluronic acid which is formed prior to ovulation. This protein aids in penetrating the layer of cumulus cells by digesting hyaluronic acid. This is Hyaluronidase PH-20 (SPAM1) from Homo sapiens (Human).